The sequence spans 130 residues: Small ribosomal subunit protein uS8 (130 aa).

It belongs to the universal ribosomal protein uS8 family.

This Candida glabrata (strain ATCC 2001 / BCRC 20586 / JCM 3761 / NBRC 0622 / NRRL Y-65 / CBS 138) (Yeast) protein is Small ribosomal subunit protein uS8 (RPS22).